Reading from the N-terminus, the 123-residue chain is Small ribosomal subunit protein uS12 (123 aa).

The residue at position 89 (Asp-89) is a 3-methylthioaspartic acid.

This sequence belongs to the universal ribosomal protein uS12 family. In terms of assembly, part of the 30S ribosomal subunit. Contacts proteins S8 and S17. May interact with IF1 in the 30S initiation complex.

Functionally, with S4 and S5 plays an important role in translational accuracy. Its function is as follows. Interacts with and stabilizes bases of the 16S rRNA that are involved in tRNA selection in the A site and with the mRNA backbone. Located at the interface of the 30S and 50S subunits, it traverses the body of the 30S subunit contacting proteins on the other side and probably holding the rRNA structure together. The combined cluster of proteins S8, S12 and S17 appears to hold together the shoulder and platform of the 30S subunit. This Methylorubrum extorquens (strain PA1) (Methylobacterium extorquens) protein is Small ribosomal subunit protein uS12.